The primary structure comprises 232 residues: Putative B3 domain-containing protein Os11g0242900 (232 aa).

A DNA-binding region (TF-B3 1) is located at residues 1-51; sequence MTVELEKIAGSFFISKGWKTFVHRTGLLSGQYIRFQVLTPSKINVLLFDKK. Positions 92-121 are disordered; it reads SHTSNKETSSDSRTESMTDIPSSSDNSGET. Basic and acidic residues predominate over residues 95–107; the sequence is SNKETSSDSRTES. Positions 108-121 are enriched in polar residues; that stretch reads MTDIPSSSDNSGET. Positions 140 to 232 form a DNA-binding region, TF-B3 2; the sequence is DIKNYISIIG…PNVKITIDVL (93 aa).

The protein resides in the nucleus. The polypeptide is Putative B3 domain-containing protein Os11g0242900 (Oryza sativa subsp. japonica (Rice)).